A 229-amino-acid polypeptide reads, in one-letter code: Ribosomal RNA small subunit methyltransferase G (229 aa).

Residues glycine 87, leucine 92, valine 138–glutamate 139, and arginine 154 each bind S-adenosyl-L-methionine.

Belongs to the methyltransferase superfamily. RNA methyltransferase RsmG family.

Its subcellular location is the cytoplasm. It carries out the reaction guanosine(527) in 16S rRNA + S-adenosyl-L-methionine = N(7)-methylguanosine(527) in 16S rRNA + S-adenosyl-L-homocysteine. Its function is as follows. Specifically methylates the N7 position of guanine in position 527 of 16S rRNA. The polypeptide is Ribosomal RNA small subunit methyltransferase G (Oleidesulfovibrio alaskensis (strain ATCC BAA-1058 / DSM 17464 / G20) (Desulfovibrio alaskensis)).